A 962-amino-acid polypeptide reads, in one-letter code: Glycine dehydrogenase (decarboxylating) (962 aa).

N6-(pyridoxal phosphate)lysine is present on Lys-709.

The protein belongs to the GcvP family. As to quaternary structure, the glycine cleavage system is composed of four proteins: P, T, L and H. Requires pyridoxal 5'-phosphate as cofactor.

It catalyses the reaction N(6)-[(R)-lipoyl]-L-lysyl-[glycine-cleavage complex H protein] + glycine + H(+) = N(6)-[(R)-S(8)-aminomethyldihydrolipoyl]-L-lysyl-[glycine-cleavage complex H protein] + CO2. In terms of biological role, the glycine cleavage system catalyzes the degradation of glycine. The P protein binds the alpha-amino group of glycine through its pyridoxal phosphate cofactor; CO(2) is released and the remaining methylamine moiety is then transferred to the lipoamide cofactor of the H protein. The chain is Glycine dehydrogenase (decarboxylating) from Shewanella loihica (strain ATCC BAA-1088 / PV-4).